We begin with the raw amino-acid sequence, 133 residues long: Ribosome-binding factor A (133 aa).

It belongs to the RbfA family. Monomer. Binds 30S ribosomal subunits, but not 50S ribosomal subunits or 70S ribosomes.

The protein localises to the cytoplasm. Its function is as follows. One of several proteins that assist in the late maturation steps of the functional core of the 30S ribosomal subunit. Associates with free 30S ribosomal subunits (but not with 30S subunits that are part of 70S ribosomes or polysomes). Required for efficient processing of 16S rRNA. May interact with the 5'-terminal helix region of 16S rRNA. The sequence is that of Ribosome-binding factor A from Salmonella heidelberg (strain SL476).